The following is a 428-amino-acid chain: Adenylosuccinate synthetase (428 aa).

Residues 12 to 18 (GDEGKGK) and 40 to 42 (GHT) each bind GTP. The Proton acceptor role is filled by Asp13. Positions 13 and 40 each coordinate Mg(2+). Residues 13 to 16 (DEGK), 38 to 41 (NAGH), Thr130, Arg144, Gln225, Thr240, and Arg304 contribute to the IMP site. His41 (proton donor) is an active-site residue. Residue 300–306 (TTTGRPR) coordinates substrate. Residues Arg306, 332-334 (KLD), and 414-416 (SVG) contribute to the GTP site.

The protein belongs to the adenylosuccinate synthetase family. As to quaternary structure, homodimer. It depends on Mg(2+) as a cofactor.

It is found in the cytoplasm. The catalysed reaction is IMP + L-aspartate + GTP = N(6)-(1,2-dicarboxyethyl)-AMP + GDP + phosphate + 2 H(+). The protein operates within purine metabolism; AMP biosynthesis via de novo pathway; AMP from IMP: step 1/2. Its function is as follows. Plays an important role in the de novo pathway of purine nucleotide biosynthesis. Catalyzes the first committed step in the biosynthesis of AMP from IMP. The protein is Adenylosuccinate synthetase of Caldanaerobacter subterraneus subsp. tengcongensis (strain DSM 15242 / JCM 11007 / NBRC 100824 / MB4) (Thermoanaerobacter tengcongensis).